The primary structure comprises 679 residues: MSAPKNEMYYSLLEWFKTLNLNAPHADAESLADGVALAQALNQFAPESFTDAWLSKIKASAVGSNWRLRMSNLKKVTQSVYDYYSDVLNYSLSDFSKPDLQRIAEKCDLGELERLLQLVLGCAVNCAEKQSYITEIMCLEEELQANIMRALQELEATRQASTPEGGVASSLSRGSRTGLLDSKAVQEDRDALAQKCFETEKKMLLLIDEKTNLQQELHKLQQEFARLEQHSTVIGDDGVSLGPVQTGSVRYNELRRQLDLLKEELLQSEGAREDLKIKAQQQDTDLLHMQMRIEELMKSSAEVTTLKDEVDVLRESNDKLKICEAQLDTYKKKLEDYNDLKKQVKILEERSADYVQQNAQFEEDAKRYANTKGQVELFKKEIQDLHAKLDAESSKNVKLEFDNKNLESKNLALQRAKDSLLKERDNLREAVDELKCGQLSSNTALTGTTVSRELQPSATVEKLQRLEAENKALREGQGGQTALAQLLDDANKRCENLREQLKTANERILSLSHASQSDDPILKESEFGKQIKQLMELNEQKTLQLEEAVTQSTSLQCKVTQLETNLSAREQEILVYDAKYRKCVEKAKEVIKSIDPRIASALDASVLEKSADLVEEEPKPKMSVMEEQLMTSAFYRLGVNAQRDAIDSKLAILMGSGQTFLARQRQSAPRKSLSAMKSK.

The interval 1 to 155 is interaction with microtubules; that stretch reads MSAPKNEMYY…NIMRALQELE (155 aa). The region spanning 6–123 is the Calponin-homology (CH) domain; the sequence is NEMYYSLLEW…RLLQLVLGCA (118 aa). Coiled coils occupy residues 135-437 and 480-574; these read EIMC…LKCG and QTAL…QEIL.

The protein belongs to the hook family. In terms of assembly, homodimer. Interacts with microtubules via its N-terminus.

It localises to the cytoplasm. Its subcellular location is the cytoskeleton. The protein localises to the endosome. The protein resides in the synapse. In terms of biological role, involved in endocytic trafficking by stabilizing organelles of the endocytic pathway. Probably acts as a cytoskeletal linker protein required to tether endosome vesicles to the cytoskeleton. Involved in modulation of endocytosis at stages required for down-regulation of membrane proteins that control synapse size. Not involved in synaptic vesicle recycling. Required in R7 cells for boss endocytosis into multivesicular bodies (MVBs). Has a role in regulating adult longevity. This chain is Protein hook, found in Drosophila melanogaster (Fruit fly).